Here is a 129-residue protein sequence, read N- to C-terminus: uncharacterized protein (129 aa).

This is an uncharacterized protein from Archaeoglobus fulgidus (strain ATCC 49558 / DSM 4304 / JCM 9628 / NBRC 100126 / VC-16).